A 223-amino-acid polypeptide reads, in one-letter code: Octanoyltransferase (223 aa).

Residues 35–214 enclose the BPL/LPL catalytic domain; that stretch reads GEARELIWLL…HFPAMLAGLR (180 aa). Substrate-binding positions include 74–81, 145–147, and 158–160; these read RGGRYTYH, AIG, and GFS. Cys176 serves as the catalytic Acyl-thioester intermediate.

The protein belongs to the LipB family.

It is found in the cytoplasm. The enzyme catalyses octanoyl-[ACP] + L-lysyl-[protein] = N(6)-octanoyl-L-lysyl-[protein] + holo-[ACP] + H(+). The protein operates within protein modification; protein lipoylation via endogenous pathway; protein N(6)-(lipoyl)lysine from octanoyl-[acyl-carrier-protein]: step 1/2. Its function is as follows. Catalyzes the transfer of endogenously produced octanoic acid from octanoyl-acyl-carrier-protein onto the lipoyl domains of lipoate-dependent enzymes. Lipoyl-ACP can also act as a substrate although octanoyl-ACP is likely to be the physiological substrate. The chain is Octanoyltransferase from Rhizorhabdus wittichii (strain DSM 6014 / CCUG 31198 / JCM 15750 / NBRC 105917 / EY 4224 / RW1) (Sphingomonas wittichii).